The sequence spans 292 residues: Proteasome subunit beta 2 (292 aa).

Positions 1 to 59 are cleaved as a propeptide — removed in mature form; by autocatalysis; that stretch reads MTVDRAPRITDGDTRLSFGSNLSSFSEYLRVHAPEHLPQNRFADTGGVVMGGGDVAPHG. Threonine 60 (nucleophile) is an active-site residue.

Belongs to the peptidase T1B family. As to quaternary structure, the 20S proteasome core is composed of 14 alpha and 14 beta subunits that assemble into four stacked heptameric rings, resulting in a barrel-shaped structure. The two inner rings, each composed of seven catalytic beta subunits, are sandwiched by two outer rings, each composed of seven alpha subunits. All four combinations of alpha- and beta-subunits (beta2-alpha1, beta2-alpha2, beta1-alpha2 and beta1-alpha1) yield fully assembled and proteolytically active proteasomes. The catalytic chamber with the active sites is on the inside of the barrel. Has probably a gated structure, the ends of the cylinder being occluded by the N-termini of the alpha-subunits. Is likely capped by the proteasome-associated ATPase, ARC.

The protein localises to the cytoplasm. The enzyme catalyses Cleavage of peptide bonds with very broad specificity.. Its pathway is protein degradation; proteasomal Pup-dependent pathway. The formation of the proteasomal ATPase ARC-20S proteasome complex, likely via the docking of the C-termini of ARC into the intersubunit pockets in the alpha-rings, may trigger opening of the gate for substrate entry. Interconversion between the open-gate and close-gate conformations leads to a dynamic regulation of the 20S proteasome proteolysis activity. Its function is as follows. Component of the proteasome core, a large protease complex with broad specificity involved in protein degradation. The R.erythropolis proteasomes are able to cleave oligopeptides after Tyr, Phe and Leu, very poorly after Arg but not after Glu. Thus, displays chymotrypsin-like activity, low trypsin-like activity but no caspase-like activity. This Rhodococcus erythropolis (Arthrobacter picolinophilus) protein is Proteasome subunit beta 2.